Here is a 394-residue protein sequence, read N- to C-terminus: Elongation factor Tu (394 aa).

The 195-residue stretch at 10 to 204 (KPHINIGTIG…AVDDNIPTPE (195 aa)) folds into the tr-type G domain. The interval 19–26 (GHVDHGKT) is G1. 19 to 26 (GHVDHGKT) provides a ligand contact to GTP. Residue threonine 26 participates in Mg(2+) binding. The segment at 60-64 (GITIN) is G2. Residues 81–84 (DCPG) form a G3 region. GTP contacts are provided by residues 81–85 (DCPGH) and 136–139 (NKID). The G4 stretch occupies residues 136–139 (NKID). The tract at residues 174-176 (SAL) is G5.

This sequence belongs to the TRAFAC class translation factor GTPase superfamily. Classic translation factor GTPase family. EF-Tu/EF-1A subfamily. As to quaternary structure, monomer.

Its subcellular location is the cytoplasm. The enzyme catalyses GTP + H2O = GDP + phosphate + H(+). Its function is as follows. GTP hydrolase that promotes the GTP-dependent binding of aminoacyl-tRNA to the A-site of ribosomes during protein biosynthesis. In Chlamydia trachomatis serovar L2 (strain ATCC VR-902B / DSM 19102 / 434/Bu), this protein is Elongation factor Tu.